Consider the following 544-residue polypeptide: Glycoprotein gp100 (544 aa).

Residues 1–19 (MKNFILLVFLFLLVSNSLG) form the signal peptide. The Extracellular portion of the chain corresponds to 20–489 (KSNKKDDQSP…SGGGGNKKLY (470 aa)). Asn80 is a glycosylation site (N-linked (GlcNAc...) asparagine). Positions 84-99 (EPQNNPIPTVSINPDQ) are enriched in polar residues. Residues 84–215 (EPQNNPIPTV…TPTRPSSSVS (132 aa)) are disordered. Composition is skewed to low complexity over residues 126-142 (SKPTSTPTSTPSQTIPP), 150-165 (PQTTSPTSKPTSTPTP), and 189-199 (PKPTKSSKPTK). 8 N-linked (GlcNAc...) asparagine glycosylation sites follow: Asn224, Asn308, Asn332, Asn366, Asn380, Asn410, Asn422, and Asn478. Positions 444-480 (KPSTTDDDNNKNNDDGDSEIDSVGKSAVDSSKSNNNS) are disordered. Residues 490–510 (LLIILPTVLFIIVAALVAIFI) traverse the membrane as a helical segment. Topologically, residues 511–544 (KTRVSQNSGSKVNKNNNKKDSINVPFQMLDEITT) are cytoplasmic.

In terms of processing, N- and O-glycosylated.

It localises to the membrane. In Dictyostelium discoideum (Social amoeba), this protein is Glycoprotein gp100 (gppA).